Consider the following 140-residue polypeptide: Cytochrome B5 isoform D (140 aa).

Residues 5-81 (GKVFTLSEVS…LDEYYVGDID (77 aa)) form the Cytochrome b5 heme-binding domain. Residues histidine 40 and histidine 64 each contribute to the heme site. The chain crosses the membrane as a helical span at residues 109–129 (FVIKLLQFLVPLLILGLAFGI).

It belongs to the cytochrome b5 family. As to quaternary structure, interacts with CER1, BI-1, FAH1 and FAH2. In terms of tissue distribution, expressed in roots, stems, leaves, flowers and siliques.

It localises to the endoplasmic reticulum membrane. Membrane bound hemoprotein which function as an electron carrier for several membrane bound oxygenases, including fatty acid desaturases. The protein is Cytochrome B5 isoform D of Arabidopsis thaliana (Mouse-ear cress).